The following is a 182-amino-acid chain: UPF0398 protein lwe1908 (182 aa).

It belongs to the UPF0398 family.

The chain is UPF0398 protein lwe1908 from Listeria welshimeri serovar 6b (strain ATCC 35897 / DSM 20650 / CCUG 15529 / CIP 8149 / NCTC 11857 / SLCC 5334 / V8).